The primary structure comprises 346 residues: DNA-directed RNA polymerase subunit alpha (346 aa).

Positions 1 to 233 (MLRDEVAVSA…DLFIPFLHAE (233 aa)) are alpha N-terminal domain (alpha-NTD). The tract at residues 268 to 346 (IELKCIFIDQ…NKFLIGNPSE (79 aa)) is alpha C-terminal domain (alpha-CTD).

It belongs to the RNA polymerase alpha chain family. In plastids the minimal PEP RNA polymerase catalytic core is composed of four subunits: alpha, beta, beta', and beta''. When a (nuclear-encoded) sigma factor is associated with the core the holoenzyme is formed, which can initiate transcription.

The protein resides in the plastid. The protein localises to the chloroplast. It catalyses the reaction RNA(n) + a ribonucleoside 5'-triphosphate = RNA(n+1) + diphosphate. Functionally, DNA-dependent RNA polymerase catalyzes the transcription of DNA into RNA using the four ribonucleoside triphosphates as substrates. The chain is DNA-directed RNA polymerase subunit alpha from Ranunculus macranthus (Large buttercup).